Reading from the N-terminus, the 484-residue chain is tRNA sulfurtransferase (484 aa).

Residues 63–167 form the THUMP domain; it reads EAFAERLACI…KESLYLVSKR (105 aa). ATP contacts are provided by residues 185 to 186, Lys267, Gly289, and Gln298; that span reads LI. Cys346 and Cys458 form a disulfide bridge. The 79-residue stretch at 406 to 484 folds into the Rhodanese domain; sequence INSGEVIIDV…GYDNVKVYRP (79 aa). The Cysteine persulfide intermediate role is filled by Cys458.

The protein belongs to the ThiI family.

Its subcellular location is the cytoplasm. It carries out the reaction [ThiI sulfur-carrier protein]-S-sulfanyl-L-cysteine + a uridine in tRNA + 2 reduced [2Fe-2S]-[ferredoxin] + ATP + H(+) = [ThiI sulfur-carrier protein]-L-cysteine + a 4-thiouridine in tRNA + 2 oxidized [2Fe-2S]-[ferredoxin] + AMP + diphosphate. It catalyses the reaction [ThiS sulfur-carrier protein]-C-terminal Gly-Gly-AMP + S-sulfanyl-L-cysteinyl-[cysteine desulfurase] + AH2 = [ThiS sulfur-carrier protein]-C-terminal-Gly-aminoethanethioate + L-cysteinyl-[cysteine desulfurase] + A + AMP + 2 H(+). Its pathway is cofactor biosynthesis; thiamine diphosphate biosynthesis. In terms of biological role, catalyzes the ATP-dependent transfer of a sulfur to tRNA to produce 4-thiouridine in position 8 of tRNAs, which functions as a near-UV photosensor. Also catalyzes the transfer of sulfur to the sulfur carrier protein ThiS, forming ThiS-thiocarboxylate. This is a step in the synthesis of thiazole, in the thiamine biosynthesis pathway. The sulfur is donated as persulfide by IscS. This is tRNA sulfurtransferase from Shewanella woodyi (strain ATCC 51908 / MS32).